Reading from the N-terminus, the 290-residue chain is Protease HtpX (290 aa).

2 helical membrane-spanning segments follow: residues 6 to 26 and 36 to 56; these read LFLVTNLAVMLVLGVVLNILF and ISGLLVFCAVFGFGGSFISLL. H143 contributes to the Zn(2+) binding site. E144 is a catalytic residue. Residue H147 participates in Zn(2+) binding. Transmembrane regions (helical) follow at residues 158-178 and 200-220; these read LIQGVVNTFVMFFARIVAGVI and ITVFVLEMLFGVLASIIVMWF. E225 is a binding site for Zn(2+).

It belongs to the peptidase M48B family. It depends on Zn(2+) as a cofactor.

It is found in the cell inner membrane. The polypeptide is Protease HtpX (Aeromonas hydrophila subsp. hydrophila (strain ATCC 7966 / DSM 30187 / BCRC 13018 / CCUG 14551 / JCM 1027 / KCTC 2358 / NCIMB 9240 / NCTC 8049)).